A 159-amino-acid chain; its full sequence is UPF0587 protein v1g245604 (159 aa).

Zn(2+) contacts are provided by Cys33, Cys36, Cys67, and Cys70.

The protein belongs to the UPF0587 family.

In Nematostella vectensis (Starlet sea anemone), this protein is UPF0587 protein v1g245604.